The chain runs to 166 residues: Outer membrane protein assembly factor BamE (166 aa).

The signal sequence occupies residues 1–18; sequence MKRTVFPLAVAAALTLTA. Residue C19 is the site of N-palmitoyl cysteine attachment. Residue C19 is the site of S-diacylglycerol cysteine attachment. The interval 143–166 is disordered; the sequence is LFSNDDSGEMPVKPESKPSDLLNE.

This sequence belongs to the BamE family. Part of the Bam complex.

It is found in the cell outer membrane. Its function is as follows. Part of the outer membrane protein assembly complex, which is involved in assembly and insertion of beta-barrel proteins into the outer membrane. This Methylomonas methanica (strain DSM 25384 / MC09) protein is Outer membrane protein assembly factor BamE.